The primary structure comprises 551 residues: Structure-specific endonuclease subunit MUS81 (551 aa).

2 disordered regions span residues 85–131 and 231–255; these read LASG…AGYW and PEEH…EVGV. Residue S95 is modified to Phosphoserine. Residues 110–131 show a composition bias toward polar residues; sequence VQGSSMPVPTQPQAGSTNAGYW. The segment at 124 to 243 is interaction with BLM; it reads GSTNAGYWPA…HHEESPVPEA (120 aa). The segment at 131–230 is winged helix domain (WHD); critical for endonuclease activity; it reads WPAQNSGARE…GLSTLNTAFQ (100 aa). The ERCC4 domain occupies 270–372; the sequence is LLCVDIGETR…HRIYLVEEHG (103 aa). Active-site residues include D274, E277, and D307. Residues D274, E277, D307, E333, and R334 each contribute to the Mg(2+) site. The tract at residues 471–545 is helix-hairpin-helix (2HhH); involved in DNA recognition and bending; it reads VREVFARQLM…LSRTLYQLYC (75 aa).

This sequence belongs to the XPF family. In terms of assembly, part of the heterodimeric DNA structure-specific endonuclease complex MUS81-EME1. Part of the heterodimeric DNA structure-specific endonuclease complex MUS81-EME2. Interacts with BLM; may stimulate the endonuclease activity of MUS81. Interacts with SLX4/BTBD12; this interaction is direct and links the MUS81-EME1 complex to SLX4, which may coordinate the action of the structure-specific endonuclease during DNA repair. Interacts with DCLRE1B/Apollo. Interacts with RECQL5; this interaction stimulates mitotic DNA synthesis. Interacts with CHEK2. It depends on Mg(2+) as a cofactor.

The protein resides in the nucleus. The protein localises to the nucleolus. Its function is as follows. Catalytic subunit of two functionally distinct, structure-specific, heterodimeric DNA endonucleases MUS81-EME1 and MUS81-EME2 that are involved in the maintenance of genome stability. Both endonucleases have essentially the same substrate specificity though MUS81-EME2 is more active than its MUS81-EME1 counterpart. Both cleave 3'-flaps and nicked Holliday junctions, and exhibit limited endonuclease activity with 5' flaps and nicked double-stranded DNAs. MUS81-EME2 which is active during the replication of DNA is more specifically involved in replication fork processing. Replication forks frequently encounter obstacles to their passage, including DNA base lesions, DNA interstrand cross-links, difficult-to-replicate sequences, transcription bubbles, or tightly bound proteins. One mechanism for the restart of a stalled replication fork involves nucleolytic cleavage mediated by the MUS81-EME2 endonuclease. By acting upon the stalled fork, MUS81-EME2 generates a DNA double-strand break (DSB) that can be repaired by homologous recombination, leading to the restoration of an active fork. MUS81-EME2 could also function in telomere maintenance. MUS81-EME1, on the other hand, is active later in the cell cycle and functions in the resolution of mitotic recombination intermediates including the Holliday junctions, the four-way DNA intermediates that form during homologous recombination. The chain is Structure-specific endonuclease subunit MUS81 from Rattus norvegicus (Rat).